The following is a 721-amino-acid chain: MDGKVGNTTTGCPVMHGGMTSAGTSNTAWWPNALNLDILHQHDTKTNPMGKDFNYREEVKKLNFEALKKDLHALMTDSQAWWPADWGHYGGLMIRMSWHAAGSYRVADGRGGAGTGNQRFAPLNSWPDNVNLDKARRLLWPIKKKYGNKISWADLIVLAGTIAYESMGLKTFGFGFGREDIWHPEKDVYWGSEQEWLGAKRYDDKDRQSLETPLAAVQMGLIYVNPEGVNGQPDPLRTAQDVRVTFGRMAMNDEETVALTAGGHTVGKCHGNGNAKFLGPEPEAADIEDQGLGWINKTTRGIGRNTVSSGIEGAWTTHPTQWDNGYFYLLLNYDWELKKSPAGAWQWEPIHIKEEDKPVDVEDPAIRHNPIMTDADMAIKMDPVYRKIAERFYKDPDYFAEVFARAWFKLTHRDMGPKTRYIGPDVPKEDLIWQDPVPAGNRAYDIAAAKAKIAASNLTIGEMVSTAWDSARTFRGSDKRGGANGARIRLKPQKDWEGNEPQRLTKVLRILEDIAADTGASVADVIVLAGNVGIEKAAKAAGFDIIVPFAPGRGDATDDMTDAESFDVLEPLHDGYRNWLKKAYDVRPEELMLDRTQLMGLTAHEMTVLVGGLRVLGTNHNNTQHGVFTDRVGALTNDFFVNLTDMANVWIPSKDNLYEIRDRKAGNIKWTATRVDLVFGSNSILRSYAEVYAQDDNKGKFIQDFVAAWTKVMNADRFDLA.

Residues 98–223 (WHAAGSYRVA…LAAVQMGLIY (126 aa)) constitute a cross-link (tryptophyl-tyrosyl-methioninium (Trp-Tyr) (with M-249)). Catalysis depends on histidine 99, which acts as the Proton acceptor. The segment at residues 223–249 (YVNPEGVNGQPDPLRTAQDVRVTFGRM) is a cross-link (tryptophyl-tyrosyl-methioninium (Tyr-Met) (with W-98)). Histidine 264 contributes to the heme b binding site.

Belongs to the peroxidase family. Peroxidase/catalase subfamily. Homodimer or homotetramer. It depends on heme b as a cofactor. In terms of processing, formation of the three residue Trp-Tyr-Met cross-link is important for the catalase, but not the peroxidase activity of the enzyme.

The enzyme catalyses H2O2 + AH2 = A + 2 H2O. It carries out the reaction 2 H2O2 = O2 + 2 H2O. In terms of biological role, bifunctional enzyme with both catalase and broad-spectrum peroxidase activity. The sequence is that of Catalase-peroxidase 1 from Legionella pneumophila (strain Corby).